The sequence spans 55 residues: Large ribosomal subunit protein bL33B (55 aa).

This sequence belongs to the bacterial ribosomal protein bL33 family.

This is Large ribosomal subunit protein bL33B from Mycobacteroides abscessus (strain ATCC 19977 / DSM 44196 / CCUG 20993 / CIP 104536 / JCM 13569 / NCTC 13031 / TMC 1543 / L948) (Mycobacterium abscessus).